Consider the following 389-residue polypeptide: Glycerol-3-phosphate dehydrogenase [NAD(+)] 2 (389 aa).

NAD(+) contacts are provided by residues 40-45 (GSGNWG), Phe-128, Lys-151, and Ala-184. Position 151 (Lys-151) interacts with substrate. Lys-244 (proton acceptor) is an active-site residue. NAD(+) contacts are provided by Arg-309 and Gln-338. Residue 309–310 (RN) participates in substrate binding.

The protein belongs to the NAD-dependent glycerol-3-phosphate dehydrogenase family.

The protein localises to the cytoplasm. It catalyses the reaction sn-glycerol 3-phosphate + NAD(+) = dihydroxyacetone phosphate + NADH + H(+). The sequence is that of Glycerol-3-phosphate dehydrogenase [NAD(+)] 2 (GPD2) from Zygosaccharomyces rouxii.